The following is a 390-amino-acid chain: Mannitol-1-phosphate 5-dehydrogenase (390 aa).

3 to 14 provides a ligand contact to NAD(+); sequence ALHFGAGNIGRG.

The protein belongs to the mannitol dehydrogenase family.

It carries out the reaction D-mannitol 1-phosphate + NAD(+) = beta-D-fructose 6-phosphate + NADH + H(+). The protein is Mannitol-1-phosphate 5-dehydrogenase of Buchnera aphidicola subsp. Baizongia pistaciae (strain Bp).